Reading from the N-terminus, the 120-residue chain is Large ribosomal subunit protein bL20 (120 aa).

This sequence belongs to the bacterial ribosomal protein bL20 family.

Binds directly to 23S ribosomal RNA and is necessary for the in vitro assembly process of the 50S ribosomal subunit. It is not involved in the protein synthesizing functions of that subunit. This Ligilactobacillus salivarius (strain UCC118) (Lactobacillus salivarius) protein is Large ribosomal subunit protein bL20.